The following is an 809-amino-acid chain: Penicillin-binding protein 1A (809 aa).

The Cytoplasmic portion of the chain corresponds to 1-34 (MSDNTKTNSRNKSVKRTKKVKKKKKFGFFKKLFT). A helical; Signal-anchor for type II membrane protein membrane pass occupies residues 35–55 (ILFCLFILLSVAASGVIFAIV). Residues 56 to 809 (KTSPNLDING…PNNNTTNTNK (754 aa)) are Extracellular-facing. The transglycosylase stretch occupies residues 74–251 (SQLYDDNNNP…PSAYYPFSQN (178 aa)). Glu-113 serves as the catalytic Proton donor; for transglycosylase activity. A transpeptidase region spans residues 381-664 (AAATLFDYHT…VAEIWGEIMK (284 aa)). The Acyl-ester intermediate; for transpeptidase activity role is filled by Ser-422. Positions 694–809 (SPSNLSGDDS…PNNNTTNTNK (116 aa)) are disordered.

The protein in the N-terminal section; belongs to the glycosyltransferase 51 family. In the C-terminal section; belongs to the transpeptidase family.

It localises to the cell membrane. The catalysed reaction is [GlcNAc-(1-&gt;4)-Mur2Ac(oyl-L-Ala-gamma-D-Glu-L-Lys-D-Ala-D-Ala)](n)-di-trans,octa-cis-undecaprenyl diphosphate + beta-D-GlcNAc-(1-&gt;4)-Mur2Ac(oyl-L-Ala-gamma-D-Glu-L-Lys-D-Ala-D-Ala)-di-trans,octa-cis-undecaprenyl diphosphate = [GlcNAc-(1-&gt;4)-Mur2Ac(oyl-L-Ala-gamma-D-Glu-L-Lys-D-Ala-D-Ala)](n+1)-di-trans,octa-cis-undecaprenyl diphosphate + di-trans,octa-cis-undecaprenyl diphosphate + H(+). It catalyses the reaction Preferential cleavage: (Ac)2-L-Lys-D-Ala-|-D-Ala. Also transpeptidation of peptidyl-alanyl moieties that are N-acyl substituents of D-alanine.. The protein operates within cell wall biogenesis; peptidoglycan biosynthesis. Its function is as follows. Cell wall formation. Synthesis of cross-linked peptidoglycan from the lipid intermediates. The enzyme has a penicillin-insensitive transglycosylase N-terminal domain (formation of linear glycan strands) and a penicillin-sensitive transpeptidase C-terminal domain (cross-linking of the peptide subunits). This chain is Penicillin-binding protein 1A (pbpA), found in Clostridium acetobutylicum (strain ATCC 824 / DSM 792 / JCM 1419 / IAM 19013 / LMG 5710 / NBRC 13948 / NRRL B-527 / VKM B-1787 / 2291 / W).